The sequence spans 497 residues: Envelope glycoprotein E (497 aa).

Residues 1–398 (MCVFQILIIV…GTIIYDILLT (398 aa)) lie on the Virion surface side of the membrane. N-linked (GlcNAc...) asparagine; by host glycans are attached at residues Asn-60, Asn-133, Asn-148, Asn-203, Asn-277, Asn-366, and Asn-388. A helical membrane pass occupies residues 399-419 (SLSIGAIIIVIVGGVCIAILI). The Intravirion portion of the chain corresponds to 420–497 (RRRRRRRTRG…KIRKRLDLYH (78 aa)).

The protein belongs to the alphaherpesvirinae glycoprotein E family. Interacts with gI. In terms of processing, phosphorylated within the acidic cluster. Phosphorylation determines whether endocytosed viral gE traffics to the trans-Golgi network or recycles to the cell membrane.

The protein localises to the virion membrane. Its subcellular location is the host cell membrane. The protein resides in the host cell junction. It localises to the host Golgi apparatus membrane. It is found in the host endosome membrane. In terms of biological role, in epithelial cells, the heterodimer gE/gI is required for the cell-to-cell spread of the virus, by sorting nascent virions to cell junctions. Once the virus reaches the cell junctions, virus particles can spread to adjacent cells extremely rapidly through interactions with cellular receptors that accumulate at these junctions. Implicated in basolateral spread in polarized cells. In neuronal cells, gE/gI is essential for the anterograde spread of the infection throughout the host nervous system. Together with US9, the heterodimer gE/gI is involved in the sorting and transport of viral structural components toward axon tips. The protein is Envelope glycoprotein E (MDV096) of Gallus gallus (Chicken).